A 507-amino-acid chain; its full sequence is MVKIRPDEISSIIRKQIEDYSQEIKVVNVGTVLQVGDGIARIYGLDKVMAGELVEFEDNSIGIALNLESDNVGVVLMGDGLTIQEGSSVKATGKIAQIPVSDGYLGRVVNALAQPIDGKGQIPASEFRLIESSAPGIISRRSVYEPMQTGLIAIDSMIPIGRGQRELIIGDRQTGKTAVATDTILNQKGQNVICVYVAIGQKASSVAQVVNTFEERGALEYTIVVAEAANSPATLQYLAPYTGAALAEYFMYRKQHTLIIYDDLSKQAQAYRQMSLLLRRPPGREAYPGDVFYLHSRLLERAAKLSSQLGEGSMTALPIVETQAGDVSAYIPTNVISITDGQIFLSADLFNAGIRPAINVGISVSRVGSAAQIKAMKQVAGKLKLELAQFAELEAFAQFASDLDKATQNQLARGQRLRELLKQSQSSPLAVEEQVATIYTGVNGYLDVLEVDQVKKFLVQLREYLTTNKPQFAEIIRSTKVFTEQAEGILKEAIKEHTELFLLQEDK.

Gly-170–Thr-177 provides a ligand contact to ATP.

It belongs to the ATPase alpha/beta chains family. In terms of assembly, F-type ATPases have 2 components, CF(1) - the catalytic core - and CF(0) - the membrane proton channel. CF(1) has five subunits: alpha(3), beta(3), gamma(1), delta(1), epsilon(1). CF(0) has four main subunits: a, b, b' and c.

The protein resides in the plastid. The protein localises to the chloroplast thylakoid membrane. It catalyses the reaction ATP + H2O + 4 H(+)(in) = ADP + phosphate + 5 H(+)(out). Produces ATP from ADP in the presence of a proton gradient across the membrane. The alpha chain is a regulatory subunit. The protein is ATP synthase subunit alpha, chloroplastic of Physcomitrium patens (Spreading-leaved earth moss).